Consider the following 489-residue polypeptide: Acetyl-coenzyme A carboxylase carboxyl transferase subunit beta, chloroplastic (489 aa).

The CoA carboxyltransferase N-terminal domain maps to 225–489 (LWIQCDNCYG…FFPLNKTEIK (265 aa)). The Zn(2+) site is built by cysteine 229, cysteine 232, cysteine 245, and cysteine 248. The C4-type zinc-finger motif lies at 229-248 (CDNCYGLMYKKVEMNVCEEC).

The protein belongs to the AccD/PCCB family. In terms of assembly, acetyl-CoA carboxylase is a heterohexamer composed of biotin carboxyl carrier protein, biotin carboxylase and 2 subunits each of ACCase subunit alpha and ACCase plastid-coded subunit beta (accD). Zn(2+) is required as a cofactor.

It is found in the plastid. The protein localises to the chloroplast stroma. The catalysed reaction is N(6)-carboxybiotinyl-L-lysyl-[protein] + acetyl-CoA = N(6)-biotinyl-L-lysyl-[protein] + malonyl-CoA. The protein operates within lipid metabolism; malonyl-CoA biosynthesis; malonyl-CoA from acetyl-CoA: step 1/1. Its function is as follows. Component of the acetyl coenzyme A carboxylase (ACC) complex. Biotin carboxylase (BC) catalyzes the carboxylation of biotin on its carrier protein (BCCP) and then the CO(2) group is transferred by the transcarboxylase to acetyl-CoA to form malonyl-CoA. This is Acetyl-coenzyme A carboxylase carboxyl transferase subunit beta, chloroplastic from Draba nemorosa (Woodland whitlowgrass).